Reading from the N-terminus, the 344-residue chain is L-rhamnose-proton symporter (344 aa).

The next 10 membrane-spanning stretches (helical) occupy residues 4 to 24 (AITMGIFWHLIGAASAACFYA), 38 to 58 (WSVGGIVSWIILPWAISALLL), 68 to 88 (FSLSTLLPVFLFGAMWGIGNI), 101 to 121 (MGIGIAIGITLIVGTLMTPII), 137 to 157 (TLLGVLVALIGVGIVTRAGQL), 175 to 195 (LVLAVMCGIFSAGMSFAMNAA), 214 to 234 (LPSYVVIMGGGAIINLGFCFI), 259 to 279 (VLLSALGGLMWYLQFFFYAWG), 290 to 310 (ISWMLHMSFYVLCGGIVGLVL), and 323 to 343 (VLSLGCVVIIVAANIVGIGMA).

It belongs to the L-rhamnose transporter (TC 2.A.7.6) family.

It is found in the cell inner membrane. It catalyses the reaction L-rhamnopyranose(in) + H(+)(in) = L-rhamnopyranose(out) + H(+)(out). Functionally, uptake of L-rhamnose across the cytoplasmic membrane with the concomitant transport of protons into the cell (symport system). The sequence is that of L-rhamnose-proton symporter from Shigella dysenteriae serotype 1 (strain Sd197).